The primary structure comprises 233 residues: DnaA regulatory inactivator Hda (233 aa).

This sequence belongs to the DnaA family. HdA subfamily. The active form seems to be an ADP-bound monomer. Forms the RIDA complex (regulatory inactivation of DnaA) of ATP-DnaA, ADP-Hda and the DNA-loaded beta sliding clamp (dnaN).

Functionally, mediates the interaction of DNA replication initiator protein DnaA with DNA polymerase subunit beta sliding clamp (dnaN). Stimulates hydrolysis of ATP-DnaA to ADP-DnaA, rendering DnaA inactive for reinitiation, a process called regulatory inhibition of DnaA or RIDA. In Shigella boydii serotype 4 (strain Sb227), this protein is DnaA regulatory inactivator Hda.